The primary structure comprises 370 residues: Probable endopolygalacturonase A (370 aa).

A signal peptide spans 1-19; the sequence is MPSAKPLFCLATLAGAALA. Positions 20–32 are excised as a propeptide; the sequence is APAPSRATDFNKR. The cysteines at positions 35 and 50 are disulfide-linked. PbH1 repeat units follow at residues 162-192, 193-214, 215-235, 244-265, 273-295, and 307-352; these read SDNLVIEDVTIDNSDGDSEGGHNTDGFDISE, STYITITGATVKNQDDCVAINS, GENIYFSGGTCSGGHGLSIGS, VKNVTFIDSTVSDSENGVRIKT, VEDITYSNIQLSGISDYGIVIEQ, and SNGV…DITG. The active-site Proton donor is the Asp-207. Cysteines 209 and 225 form a disulfide. His-229 is a catalytic residue. The N-linked (GlcNAc...) asparagine glycan is linked to Asn-246. Intrachain disulfides connect Cys-335-Cys-340 and Cys-359-Cys-368.

This sequence belongs to the glycosyl hydrolase 28 family.

The protein resides in the secreted. The catalysed reaction is (1,4-alpha-D-galacturonosyl)n+m + H2O = (1,4-alpha-D-galacturonosyl)n + (1,4-alpha-D-galacturonosyl)m.. Functionally, involved in maceration and soft-rotting of plant tissue. Hydrolyzes the 1,4-alpha glycosidic bonds of de-esterified pectate in the smooth region of the plant cell wall. The protein is Probable endopolygalacturonase A (pgaA) of Aspergillus kawachii (strain NBRC 4308) (White koji mold).